The following is a 289-amino-acid chain: MMARPRNHRPSARKSSHSTLVFAVLIMSTFVILILLAFGILSVPSNNAGSSKANDLTSIVRKTLQRSGEDDSKNERWVEIISWEPRASVYHNFLTKEECKYLIELAKPHMEKSTVVDEKTGKSTDSRVRTSSGTFLARGRDKTIREIEKRISDFTFIPVEHGEGLQVLHYEIGQKYEPHYDYFMDEYNTRNGGQRIATVLMYLSDVEEGGETVFPAAKGNYSAVPWWNELSECGKGGLSVKPKMGDALLFWSMTPDATLDPSSLHGGCAVIKGNKWSSTKWLRVHEYKV.

Residues 20 to 40 traverse the membrane as a helical; Signal-anchor for type II membrane protein segment; the sequence is LVFAVLIMSTFVILILLAFGI. Topologically, residues 41-289 are lumenal; it reads LSVPSNNAGS…KWLRVHEYKV (249 aa). Residues 161–284 form the Fe2OG dioxygenase domain; that stretch reads HGEGLQVLHY…KWSSTKWLRV (124 aa). Fe cation contacts are provided by histidine 179 and aspartate 181. N-linked (GlcNAc...) asparagine glycosylation occurs at asparagine 220. Fe cation is bound at residue histidine 265. 2-oxoglutarate is bound at residue lysine 275.

This sequence belongs to the P4HA family. It depends on Fe(2+) as a cofactor. L-ascorbate serves as cofactor.

The protein resides in the endoplasmic reticulum membrane. It carries out the reaction L-prolyl-[collagen] + 2-oxoglutarate + O2 = trans-4-hydroxy-L-prolyl-[collagen] + succinate + CO2. Catalyzes the post-translational formation of 4-hydroxyproline in -Xaa-Pro-Gly- sequences in proline-rich peptide sequences of plant glycoproteins and other proteins. Hydroxyprolines are important constituent of many plant cell wall glycoproteins such as extensins, hydroxyproline-rich glycoproteins, lectins and arabinogalactan proteins. This chain is Probable prolyl 4-hydroxylase 10, found in Arabidopsis thaliana (Mouse-ear cress).